The sequence spans 353 residues: Protein RecA (353 aa).

73–80 provides a ligand contact to ATP; sequence GPESSGKT.

Belongs to the RecA family.

The protein resides in the cytoplasm. Its function is as follows. Can catalyze the hydrolysis of ATP in the presence of single-stranded DNA, the ATP-dependent uptake of single-stranded DNA by duplex DNA, and the ATP-dependent hybridization of homologous single-stranded DNAs. It interacts with LexA causing its activation and leading to its autocatalytic cleavage. In Bordetella avium (strain 197N), this protein is Protein RecA.